Here is a 206-residue protein sequence, read N- to C-terminus: Tumor protein D54 (206 aa).

M1 is subject to N-acetylmethionine. Polar residues predominate over residues 1-14 (MDSAGQDINLNSPN). The interval 1-24 (MDSAGQDINLNSPNKGLLSDSMTD) is disordered. Phosphoserine occurs at positions 3, 12, 19, and 21. Residues 38-82 (VEGLTEAEEEELRAELTKVEEEIVTLRQVLAAKERHCGELKRRLG) are a coiled coil. A phosphoserine mark is found at S96, S149, and S161. Residue T163 is modified to Phosphothreonine. At S166 the chain carries Phosphoserine. T173 carries the phosphothreonine modification. The span at 175–185 (KSKVVGDRENG) shows a compositional bias: basic and acidic residues. The tract at residues 175–206 (KSKVVGDRENGSDSLPSSAGSGDKPLSDPAPF) is disordered. A phosphoserine mark is found at S192 and S195.

The protein belongs to the TPD52 family. In terms of assembly, forms a homodimer or heterodimer with other members of the family. Interacts with MAL2.

The chain is Tumor protein D54 (TPD52L2) from Pongo abelii (Sumatran orangutan).